A 197-amino-acid chain; its full sequence is MSMLSLHQLQLNIEKRNLFDLCITFLPSAITYIKGANGSGKSSLLRMIAGIMQPSSGNIYYKNSHINNCQKPYCTYIGHNLGIKLEMTVFENLKFWSEIYNSTETVQAAIHYFKLDYLLDKKCYNLSSGIQKVVAIARLIVCKSDLWLLDEVETNLSKENRDLLNNLIIMKANSGGIILLSSHQESVIKSAQILQLK.

Residues 1-196 (MSMLSLHQLQ…VIKSAQILQL (196 aa)) enclose the ABC transporter domain. 35–42 (GANGSGKS) lines the ATP pocket.

This sequence belongs to the ABC transporter superfamily. CcmA exporter (TC 3.A.1.107) family. The complex is composed of two ATP-binding proteins (CcmA) and two transmembrane proteins (CcmB).

It is found in the cell inner membrane. It catalyses the reaction heme b(in) + ATP + H2O = heme b(out) + ADP + phosphate + H(+). In terms of biological role, part of the ABC transporter complex CcmAB involved in the biogenesis of c-type cytochromes; once thought to export heme, this seems not to be the case, but its exact role is uncertain. Responsible for energy coupling to the transport system. This is Cytochrome c biogenesis ATP-binding export protein CcmA from Rickettsia typhi (strain ATCC VR-144 / Wilmington).